The chain runs to 143 residues: Large ribosomal subunit protein uL11 (143 aa).

The protein belongs to the universal ribosomal protein uL11 family. As to quaternary structure, part of the ribosomal stalk of the 50S ribosomal subunit. Interacts with L10 and the large rRNA to form the base of the stalk. L10 forms an elongated spine to which L12 dimers bind in a sequential fashion forming a multimeric L10(L12)X complex. Post-translationally, one or more lysine residues are methylated.

Functionally, forms part of the ribosomal stalk which helps the ribosome interact with GTP-bound translation factors. The protein is Large ribosomal subunit protein uL11 of Kocuria rhizophila (strain ATCC 9341 / DSM 348 / NBRC 103217 / DC2201).